The chain runs to 288 residues: uncharacterized protein (288 aa).

One can recognise an HTH lysR-type domain in the interval 1 to 59 (MDKLNAISIFCKVIETQSFTLAAKQQNISVAMASKLVSQLEEHLKTRLLQRTTRKIMPT). The H-T-H motif DNA-binding region spans 19–38 (FTLAAKQQNISVAMASKLVS).

It belongs to the LysR transcriptional regulatory family.

This is an uncharacterized protein from Haemophilus influenzae (strain ATCC 51907 / DSM 11121 / KW20 / Rd).